The sequence spans 178 residues: MAILKWKYSRYNSSTELSTAEIATQLHAYNTTETHTKACSVGTTETQKTNHKRLRGGTELPYNPTKRVRLSAVDSVDRGVYSTSDCTNKDRCGSCSTTTPIVHLKGDANTLKCLRYRLGKYKALYQDASSTWRWTCTNDKKQIAIVTLTYTTEYQRDKFLTTVKIPNTVTVSKGYMSI.

The interval 40–60 (SVGTTETQKTNHKRLRGGTEL) is disordered.

Belongs to the papillomaviridae E8^E2C protein family.

It is found in the host nucleus. Its function is as follows. Plays a role in limiting the replication of viral DNA in keratinocytes. Recruits the host NCoR/SMRT complex to viral replication foci to mediate repression of both viral replication and transcription. The sequence is that of Protein E8^E2C from Homo sapiens (Human).